The sequence spans 882 residues: Valine--tRNA ligase (882 aa).

The short motif at 48 to 58 (PNVTGKLHLGH) is the 'HIGH' region element. The short motif at 524 to 528 (KMSKS) is the 'KMSKS' region element. Residue lysine 527 participates in ATP binding. Positions 809 to 882 (LAELLDLDEE…KRLAELKAAR (74 aa)) form a coiled coil. The interval 844-866 (GFTDRAPEKVVQEERDKQADYEQ) is disordered. The span at 845 to 863 (FTDRAPEKVVQEERDKQAD) shows a compositional bias: basic and acidic residues.

It belongs to the class-I aminoacyl-tRNA synthetase family. ValS type 1 subfamily. In terms of assembly, monomer.

Its subcellular location is the cytoplasm. The enzyme catalyses tRNA(Val) + L-valine + ATP = L-valyl-tRNA(Val) + AMP + diphosphate. In terms of biological role, catalyzes the attachment of valine to tRNA(Val). As ValRS can inadvertently accommodate and process structurally similar amino acids such as threonine, to avoid such errors, it has a 'posttransfer' editing activity that hydrolyzes mischarged Thr-tRNA(Val) in a tRNA-dependent manner. The chain is Valine--tRNA ligase from Latilactobacillus sakei subsp. sakei (strain 23K) (Lactobacillus sakei subsp. sakei).